A 434-amino-acid chain; its full sequence is CinA-like protein (434 aa).

It belongs to the CinA family.

The sequence is that of CinA-like protein from Mycolicibacterium paratuberculosis (strain ATCC BAA-968 / K-10) (Mycobacterium paratuberculosis).